The chain runs to 152 residues: Probable histone H2A.3 (152 aa).

2 disordered regions span residues 1–25 (MDASTKTTKKGAGGRKGGGPRKKSV) and 129–152 (KTERANTGGKEPKTTKAGKSPKKA). The segment covering 7 to 25 (TTKKGAGGRKGGGPRKKSV) has biased composition (basic residues). A compositionally biased stretch (basic and acidic residues) spans 129 to 142 (KTERANTGGKEPKT). The short motif at 148-151 (SPKK) is the SPKK motif element.

The protein belongs to the histone H2A family. In terms of assembly, the nucleosome is a histone octamer containing two molecules each of H2A, H2B, H3 and H4 assembled in one H3-H4 heterotetramer and two H2A-H2B heterodimers. The octamer wraps approximately 147 bp of DNA.

It is found in the nucleus. The protein localises to the chromosome. Core component of nucleosome. Nucleosomes wrap and compact DNA into chromatin, limiting DNA accessibility to the cellular machineries which require DNA as a template. Histones thereby play a central role in transcription regulation, DNA repair, DNA replication and chromosomal stability. DNA accessibility is regulated via a complex set of post-translational modifications of histones, also called histone code, and nucleosome remodeling. This is Probable histone H2A.3 from Medicago truncatula (Barrel medic).